The chain runs to 749 residues: Adenosylcobalamin-dependent ribonucleoside-triphosphate reductase (749 aa).

Cys-124 and Cys-427 are disulfide-bonded. The tract at residues 152–163 (SMPFSFMFDQLM) is effector region-1. The tract at residues 173-321 (TPNNVHQMPV…MGNMIGKTVV (149 aa)) is effector region-2. Catalysis depends on residues Cys-416 and Glu-418. Positions 573-634 (FHYARYLIQR…EPAFASAGEV (62 aa)) are adenosylcobalamin-binding-1. Residues 693 to 734 (FKQAPKEPIDAATYDAKCQEITADVAEKFAAMTGNHDQKDIE) form an adenosylcobalamin-binding-2 region.

The protein belongs to the class II ribonucleoside-triphosphate reductase family. As to quaternary structure, monomer. Requires adenosylcob(III)alamin as cofactor.

The catalysed reaction is a 2'-deoxyribonucleoside 5'-triphosphate + [thioredoxin]-disulfide + H2O = a ribonucleoside 5'-triphosphate + [thioredoxin]-dithiol. Its activity is regulated as follows. Allosterically regulated by ATP and dNTP. The protein is Adenosylcobalamin-dependent ribonucleoside-triphosphate reductase (rtpR) of Levilactobacillus brevis (strain ATCC 367 / BCRC 12310 / CIP 105137 / JCM 1170 / LMG 11437 / NCIMB 947 / NCTC 947) (Lactobacillus brevis).